Here is a 161-residue protein sequence, read N- to C-terminus: Endoribonuclease YbeY (161 aa).

Positions 127, 131, and 137 each coordinate Zn(2+).

The protein belongs to the endoribonuclease YbeY family. Zn(2+) is required as a cofactor.

The protein localises to the cytoplasm. Its function is as follows. Single strand-specific metallo-endoribonuclease involved in late-stage 70S ribosome quality control and in maturation of the 3' terminus of the 16S rRNA. This Listeria welshimeri serovar 6b (strain ATCC 35897 / DSM 20650 / CCUG 15529 / CIP 8149 / NCTC 11857 / SLCC 5334 / V8) protein is Endoribonuclease YbeY.